We begin with the raw amino-acid sequence, 334 residues long: MKNLHSLFLASAFLAGFCGSSLAGEREGVVVSIKPLHSIVSAVMQGVGKPKLIVQGAGSEHVYSLKPSDAEAIEHAKVIFWAGPSMETFLDKPIDTLGEGAKVVALGDAKGLTKLKFREGGPFEAHDHGHGGSHEEEHDAHGSGDHDHAAEVAEEGHEHHHHGEYDLHFWLDPQNGKILAADIAKTLGESDPEHAAQYEKNAKAYGEKLDALTREVAAELKPVKDKPFIVFHDAYQYFENRFGMKAAGSITVSPEKAPGAARIQQIHDKIKSLGATCVFSEPQFEPKLVKTVVDGTKARTGVLDPLGAELKDGPDLYPQLIRNLANSLKDCLSK.

The first 23 residues, 1-23 (MKNLHSLFLASAFLAGFCGSSLA), serve as a signal peptide directing secretion. Zn(2+) is bound by residues glutamate 60 and histidine 61. The interval 120 to 147 (GGPFEAHDHGHGGSHEEEHDAHGSGDHD) is disordered. Residues histidine 168 and histidine 232 each contribute to the Zn(2+) site. Cysteine 277 and cysteine 331 are joined by a disulfide.

Belongs to the bacterial solute-binding protein 9 family.

Its subcellular location is the periplasm. Its function is as follows. Part of the ATP-binding cassette (ABC) transport system ZnuABC involved in zinc import. Binds zinc with high affinity and specificity and delivers it to the membrane permease for translocation into the cytoplasm. Required for survival and normal growth under low Zn (2+) concentrations. Also required for virulence and intracellular growth in host cells. This Brucella suis biovar 1 (strain 1330) protein is High-affinity zinc uptake system protein ZnuA (znuA).